The sequence spans 232 residues: 7-cyano-7-deazaguanine synthase (232 aa).

Residue 7 to 17 (CSGGLDSVSLA) participates in ATP binding. Zn(2+)-binding residues include C185, C193, C196, and C199.

It belongs to the QueC family. Zn(2+) is required as a cofactor.

The enzyme catalyses 7-carboxy-7-deazaguanine + NH4(+) + ATP = 7-cyano-7-deazaguanine + ADP + phosphate + H2O + H(+). It participates in purine metabolism; 7-cyano-7-deazaguanine biosynthesis. Its function is as follows. Catalyzes the ATP-dependent conversion of 7-carboxy-7-deazaguanine (CDG) to 7-cyano-7-deazaguanine (preQ(0)). This Chelativorans sp. (strain BNC1) protein is 7-cyano-7-deazaguanine synthase.